The following is a 357-amino-acid chain: Cyclin-Y (357 aa).

Polar residues predominate over residues 1–13 (MGNSSCCLRTRSS). A disordered region spans residues 1-23 (MGNSSCCLRTRSSSGEDKSYNND). Positions 186 to 284 (PDHRNIYRFV…RFLECLDFNI (99 aa)) constitute a Cyclin N-terminal domain.

This sequence belongs to the cyclin family. In terms of assembly, interacts with pct-1; the interaction is required to activate pct-1.

The protein resides in the cytoplasm. The protein localises to the cell projection. Its subcellular location is the dendrite. It is found in the axon. In association with pct-1, regulates the trafficking of synaptic vesicle precursors in DA motor neurons by promoting anterograde trafficking to the axon and preventing dynein-dependent trafficking to the dendrite. May also regulate synaptic vesicle trafficking in DD motor neurons and in RIA interneurons. Involved in synapse formation during DD motor neuron remodeling by disassembling ventral presynaptic structures. May activate cdk-5. This is Cyclin-Y from Caenorhabditis elegans.